A 487-amino-acid chain; its full sequence is MSFRDDNEEARNDLRRPFIHTGSWYRMGSRQSSMMGSSQVIRDSSISVLACVLIVALGPIQFGFTCGYSSPTQAAITKDLGLTVSEYSVFGSLSNVGAMVGAIASGQIAEYIGRKGSLMIAAIPNIIGWLCISFAKDTSFLYMGRLLEGFGVGIISYTVPVYIAEIAPQNMRGGLGSVNQLSVTIGIMLAYLLGLFVPWRILAVLGILPCTLLIPGLFFIPESPRWLAKMGMTDEFETSLQVLRGFETDITVEVNEIKRSVASSTKRNTVRFVDLKRRRYYFPLMVGIGLLVLQQLGGINGVLFYSSTIFESAGVTSSNAATFGVGAIQVVATAISTWLVDKAGRRLLLTISSVGMTISLVIVAAAFYLKEFVSPDSDMYSWLSILSVVGVVAMVVFFSLGMGPIPWLIMSEILPVNIKGLAGSIATLANWFFSWLITMTANLLLAWSSGGTFTLYGLVCAFTVVFVTLWVPETKGKTLEELQSLFR.

At serine 2 the chain carries N-acetylserine. Transmembrane regions (helical) follow at residues 46–66, 89–109, 115–135, 146–166, 178–198, 201–221, 284–304, 320–340, 347–367, 389–409, 425–445, and 451–471; these read ISVLACVLIVALGPIQFGFTC, VFGSLSNVGAMVGAIASGQIA, KGSLMIAAIPNIIGWLCISFA, LLEGFGVGIISYTVPVYIAEI, VNQLSVTIGIMLAYLLGLFVP, ILAVLGILPCTLLIPGLFFIP, LMVGIGLLVLQQLGGINGVLF, AATFGVGAIQVVATAISTWLV, LLLTISSVGMTISLVIVAAAF, VGVVAMVVFFSLGMGPIPWLI, IATLANWFFSWLITMTANLLL, and GTFTLYGLVCAFTVVFVTLWV.

The protein belongs to the major facilitator superfamily. Sugar transporter (TC 2.A.1.1) family.

The protein resides in the membrane. Its function is as follows. Sugar transporter. This is Sugar transporter ERD6-like 6 from Arabidopsis thaliana (Mouse-ear cress).